Reading from the N-terminus, the 464-residue chain is ATP synthase subunit beta (464 aa).

153–160 (GGAGVGKT) serves as a coordination point for ATP.

This sequence belongs to the ATPase alpha/beta chains family. In terms of assembly, F-type ATPases have 2 components, CF(1) - the catalytic core - and CF(0) - the membrane proton channel. CF(1) has five subunits: alpha(3), beta(3), gamma(1), delta(1), epsilon(1). CF(0) has three main subunits: a(1), b(2) and c(9-12). The alpha and beta chains form an alternating ring which encloses part of the gamma chain. CF(1) is attached to CF(0) by a central stalk formed by the gamma and epsilon chains, while a peripheral stalk is formed by the delta and b chains.

Its subcellular location is the cell inner membrane. The catalysed reaction is ATP + H2O + 4 H(+)(in) = ADP + phosphate + 5 H(+)(out). Its function is as follows. Produces ATP from ADP in the presence of a proton gradient across the membrane. The catalytic sites are hosted primarily by the beta subunits. The polypeptide is ATP synthase subunit beta (Burkholderia lata (strain ATCC 17760 / DSM 23089 / LMG 22485 / NCIMB 9086 / R18194 / 383)).